Consider the following 417-residue polypeptide: D-amino acid dehydrogenase (417 aa).

Position 3–17 (3–17 (VVILGSGVIGVTSAW)) interacts with FAD.

The protein belongs to the DadA oxidoreductase family. FAD serves as cofactor.

The catalysed reaction is a D-alpha-amino acid + A + H2O = a 2-oxocarboxylate + AH2 + NH4(+). It participates in amino-acid degradation; D-alanine degradation; NH(3) and pyruvate from D-alanine: step 1/1. Oxidative deamination of D-amino acids. The chain is D-amino acid dehydrogenase from Edwardsiella ictaluri (strain 93-146).